The sequence spans 164 residues: Interleukin-36 beta (164 aa).

A propeptide spanning residues 1-4 (MNPQ) is cleaved from the precursor.

Belongs to the IL-1 family. In terms of assembly, interacts with cargo receptor TMED10; the interaction mediates the translocation from the cytoplasm into the ERGIC (endoplasmic reticulum-Golgi intermediate compartment) and thereby secretion. Post-translationally, N-terminal truncation leads to a dramatic enhancement of its activity (&gt;1000-fold). In terms of tissue distribution, expression at low levels in tonsil, bone marrow, heart, placenta, lung, testis and colon but not in any hematopoietic cell lines. Not detected in adipose tissue. Expressed at higher levels in psoriatic plaques than in symptomless psoriatic skin or healthy control skin. Increased levels are not detected in inflamed joint tissue.

It is found in the cytoplasm. The protein localises to the secreted. Cytokine that binds to and signals through the IL1RL2/IL-36R receptor which in turn activates NF-kappa-B and MAPK signaling pathways in target cells linked to a pro-inflammatory response. Part of the IL-36 signaling system that is thought to be present in epithelial barriers and to take part in local inflammatory response; similar to the IL-1 system with which it shares the coreceptor IL1RAP. Stimulates production of interleukin-6 and interleukin-8 in synovial fibrobasts, articular chondrocytes and mature adipocytes. Induces expression of a number of antimicrobial peptides including beta-defensins 4 and 103 as well as a number of matrix metalloproteases. Seems to be involved in skin inflammatory response by acting on keratinocytes, dendritic cells and indirectly on T-cells to drive tissue infiltration, cell maturation and cell proliferation. In cultured keratinocytes induces the expression of macrophage, T-cell, and neutrophil chemokines, such as CCL3, CCL4, CCL5, CCL2, CCL17, CCL22, CL20, CCL5, CCL2, CCL17, CCL22, CXCL8, CCL20 and CXCL1, and the production of pro-inflammatory cytokines such as TNF-alpha, IL-8 and IL-6. The sequence is that of Interleukin-36 beta from Homo sapiens (Human).